The following is a 255-amino-acid chain: Glycine-rich protein DOT1 (255 aa).

The first 21 residues, 1–21 (MANHKNLFFLCFLIGLGLCSA), serve as a signal peptide directing secretion. Positions 63 to 88 (GGGSGEGGGAGGHGEGHIGGGGGGGH) are disordered.

As to expression, expressed in emerging leaf primordia and young leaves.

The protein resides in the secreted. In terms of biological role, involved in leaf vasculature patterning. The protein is Glycine-rich protein DOT1 of Arabidopsis thaliana (Mouse-ear cress).